The primary structure comprises 497 residues: Protein nucleotidyltransferase YdiU (497 aa).

ATP is bound by residues glycine 92, glycine 94, arginine 95, lysine 114, aspartate 126, glycine 127, arginine 177, and arginine 184. The active-site Proton acceptor is aspartate 261. Residues asparagine 262 and aspartate 271 each contribute to the Mg(2+) site. Position 271 (aspartate 271) interacts with ATP.

The protein belongs to the SELO family. Mg(2+) is required as a cofactor. The cofactor is Mn(2+).

It catalyses the reaction L-seryl-[protein] + ATP = 3-O-(5'-adenylyl)-L-seryl-[protein] + diphosphate. The catalysed reaction is L-threonyl-[protein] + ATP = 3-O-(5'-adenylyl)-L-threonyl-[protein] + diphosphate. The enzyme catalyses L-tyrosyl-[protein] + ATP = O-(5'-adenylyl)-L-tyrosyl-[protein] + diphosphate. It carries out the reaction L-histidyl-[protein] + UTP = N(tele)-(5'-uridylyl)-L-histidyl-[protein] + diphosphate. It catalyses the reaction L-seryl-[protein] + UTP = O-(5'-uridylyl)-L-seryl-[protein] + diphosphate. The catalysed reaction is L-tyrosyl-[protein] + UTP = O-(5'-uridylyl)-L-tyrosyl-[protein] + diphosphate. Nucleotidyltransferase involved in the post-translational modification of proteins. It can catalyze the addition of adenosine monophosphate (AMP) or uridine monophosphate (UMP) to a protein, resulting in modifications known as AMPylation and UMPylation. This is Protein nucleotidyltransferase YdiU from Bordetella petrii (strain ATCC BAA-461 / DSM 12804 / CCUG 43448).